The following is an 88-amino-acid chain: Putative membrane protein insertion efficiency factor (88 aa).

The disordered stretch occupies residues 68–88 (VPPPNSDTRARGEADARSHRL). Residues 75 to 88 (TRARGEADARSHRL) are compositionally biased toward basic and acidic residues.

It belongs to the UPF0161 family.

Its subcellular location is the cell inner membrane. Could be involved in insertion of integral membrane proteins into the membrane. This Burkholderia orbicola (strain MC0-3) protein is Putative membrane protein insertion efficiency factor.